A 275-amino-acid polypeptide reads, in one-letter code: Dermonecrotic toxin LruSicTox-alphaIV1 (275 aa).

H5 is an active-site residue. Mg(2+) is bound by residues E25 and D27. Catalysis depends on H41, which acts as the Nucleophile. 2 disulfide bridges follow: C45–C51 and C47–C192. A Mg(2+)-binding site is contributed by D85.

It belongs to the arthropod phospholipase D family. Class II subfamily. Mg(2+) serves as cofactor. Expressed by the venom gland.

Its subcellular location is the secreted. The enzyme catalyses an N-(acyl)-sphingosylphosphocholine = an N-(acyl)-sphingosyl-1,3-cyclic phosphate + choline. It carries out the reaction an N-(acyl)-sphingosylphosphoethanolamine = an N-(acyl)-sphingosyl-1,3-cyclic phosphate + ethanolamine. It catalyses the reaction a 1-acyl-sn-glycero-3-phosphocholine = a 1-acyl-sn-glycero-2,3-cyclic phosphate + choline. The catalysed reaction is a 1-acyl-sn-glycero-3-phosphoethanolamine = a 1-acyl-sn-glycero-2,3-cyclic phosphate + ethanolamine. In terms of biological role, dermonecrotic toxins cleave the phosphodiester linkage between the phosphate and headgroup of certain phospholipids (sphingolipid and lysolipid substrates), forming an alcohol (often choline) and a cyclic phosphate. This toxin acts on sphingomyelin (SM). It may also act on ceramide phosphoethanolamine (CPE), lysophosphatidylcholine (LPC) and lysophosphatidylethanolamine (LPE), but not on lysophosphatidylserine (LPS), and lysophosphatidylglycerol (LPG). It acts by transphosphatidylation, releasing exclusively cyclic phosphate products as second products. Induces dermonecrosis, hemolysis, increased vascular permeability, edema, inflammatory response, and platelet aggregation. The protein is Dermonecrotic toxin LruSicTox-alphaIV1 of Loxosceles rufescens (Mediterranean recluse spider).